Here is a 775-residue protein sequence, read N- to C-terminus: N6-adenosine-methyltransferase non-catalytic subunit MTB (775 aa).

Positions 1 to 10 (MKKKQEESSL) are enriched in basic and acidic residues. Disordered regions lie at residues 1-424 (MKKK…GAIP) and 520-569 (DRGG…EQND). Low complexity predominate over residues 40 to 49 (FESSSRSGGS). Basic and acidic residues-rich tracts occupy residues 50 to 79 (KSKE…ERTH), 100 to 117 (DGDH…DSGG), 125 to 222 (EHGE…LKDN), 229 to 278 (SSGD…RGEA), and 333 to 344 (EWAHNQEGRQRS). A compositionally biased stretch (polar residues) spans 375-400 (QRGSTPGRTNFVQTPNRGYQTPQGTR).

It belongs to the MT-A70-like family. In terms of assembly, forms homodimers. Interacts with HAKAI, MTA and VIR. Associates with MTA, FIP37, VIR and HAKAI to form the m6A writer complex which is essential for adenosine methylation at specific mRNA sequences.

It is found in the nucleus speckle. The protein localises to the nucleus. Its subcellular location is the nucleoplasm. Its function is as follows. Probable non-catalytic subunit of the N6-methyltransferase complex, a multiprotein complex that mediates N6-methyladenosine (m6A) methylation at the 5'-[AG]GAC-3' consensus sites of some mRNAs. Associates with MTA, FIP37, VIR and HAKAI to form the m6A writer complex which is essential for adenosine methylation at specific mRNA sequences. N6-methyladenosine (m6A) plays a role in mRNA stability, processing, translation efficiency and editing. This chain is N6-adenosine-methyltransferase non-catalytic subunit MTB, found in Arabidopsis thaliana (Mouse-ear cress).